The sequence spans 294 residues: 4-diphosphocytidyl-2-C-methyl-D-erythritol kinase (294 aa).

Residue Lys-16 is part of the active site. ATP is bound at residue 99 to 109 (PMGAGLGGGSS). The active site involves Asp-141.

Belongs to the GHMP kinase family. IspE subfamily.

It carries out the reaction 4-CDP-2-C-methyl-D-erythritol + ATP = 4-CDP-2-C-methyl-D-erythritol 2-phosphate + ADP + H(+). It participates in isoprenoid biosynthesis; isopentenyl diphosphate biosynthesis via DXP pathway; isopentenyl diphosphate from 1-deoxy-D-xylulose 5-phosphate: step 3/6. Its function is as follows. Catalyzes the phosphorylation of the position 2 hydroxy group of 4-diphosphocytidyl-2C-methyl-D-erythritol. The polypeptide is 4-diphosphocytidyl-2-C-methyl-D-erythritol kinase (Polynucleobacter asymbioticus (strain DSM 18221 / CIP 109841 / QLW-P1DMWA-1) (Polynucleobacter necessarius subsp. asymbioticus)).